The chain runs to 76 residues: Candidate secreted effector protein MPL124497 (76 aa).

Positions 1–21 are cleaved as a signal peptide; that stretch reads MKLIIFAAISVAFMSFDQVLG.

Belongs to the CPGH1 family.

Its subcellular location is the secreted. The protein localises to the host cell. The protein resides in the host cytoplasm. It is found in the host nucleus. Its function is as follows. Rust effector delivered into infected tissues to modulate host functions and contribute to pathogen virulence. Enhances leaf colonization by the bacteria Pseudomonas syringae and the oomycete Hyaloperonospora arabidopsidis pathogens in an Arabidopsis thaliana infection model. The sequence is that of Candidate secreted effector protein MPL124497 from Melampsora larici-populina (strain 98AG31 / pathotype 3-4-7) (Poplar leaf rust fungus).